The primary structure comprises 315 residues: Tyrosine recombinase XerC (315 aa).

In terms of domain architecture, Core-binding (CB) spans 13-104 (ADLAAAREEW…GVRSLLRHLE (92 aa)). Residues 125–309 (SLPKPLTADD…DTQRLLEVYD (185 aa)) enclose the Tyr recombinase domain. Active-site residues include arginine 168, lysine 193, histidine 261, arginine 264, and histidine 287. Residue tyrosine 296 is the O-(3'-phospho-DNA)-tyrosine intermediate of the active site.

It belongs to the 'phage' integrase family. XerC subfamily. As to quaternary structure, forms a cyclic heterotetrameric complex composed of two molecules of XerC and two molecules of XerD.

Its subcellular location is the cytoplasm. Its function is as follows. Site-specific tyrosine recombinase, which acts by catalyzing the cutting and rejoining of the recombining DNA molecules. The XerC-XerD complex is essential to convert dimers of the bacterial chromosome into monomers to permit their segregation at cell division. It also contributes to the segregational stability of plasmids. The chain is Tyrosine recombinase XerC from Brucella suis biovar 1 (strain 1330).